Here is a 436-residue protein sequence, read N- to C-terminus: MHYLIVSYSHKNTDIATRERLAFDNGVRSESFLRELVANKFINEGILLSTCNRVEFILSVKEAHKAGDFLMEKLSEYSKIPKEELSERADVYEDTGAIHHLFCVCSSLDSLVVGETQIAGQLKSAFKFAYDGGFCSQKLSRAMHFAFKCAASVRNCTEISKNPVSVASASVSKAKDILGDLGGDTAIVVGLGEMSQLTIKHLTALGCNVILVNRDKAKAEAFAKEFGGMVSVEGFPRLGELLNHHKMLFSATGAPHTVISKDMVEPKSFRRYWFDLAVPRDIEAFESETIRIFAVDDLQEIVNKNLSLREEQAKRAYGIIGRFTQEFYKWLQSLSVDPIIKAMREQAKEAALKEITKAISKGYLPKECEKSVEKIIHNSFNTFLHHPTIKLKEISEEPQSDTVVEAVKLLFGIQEDGLMLDRYKCEYDTTSKEREE.

Residues 50 to 53, S110, 115 to 117, and Q121 contribute to the substrate site; these read TCNR and ETQ. C51 serves as the catalytic Nucleophile. Residue 190 to 195 participates in NADP(+) binding; sequence GLGEMS.

The protein belongs to the glutamyl-tRNA reductase family. In terms of assembly, homodimer.

The enzyme catalyses (S)-4-amino-5-oxopentanoate + tRNA(Glu) + NADP(+) = L-glutamyl-tRNA(Glu) + NADPH + H(+). The protein operates within porphyrin-containing compound metabolism; protoporphyrin-IX biosynthesis; 5-aminolevulinate from L-glutamyl-tRNA(Glu): step 1/2. Catalyzes the NADPH-dependent reduction of glutamyl-tRNA(Glu) to glutamate 1-semialdehyde (GSA). In Wolinella succinogenes (strain ATCC 29543 / DSM 1740 / CCUG 13145 / JCM 31913 / LMG 7466 / NCTC 11488 / FDC 602W) (Vibrio succinogenes), this protein is Glutamyl-tRNA reductase.